Consider the following 527-residue polypeptide: Protein IQ-DOMAIN 4 (527 aa).

A disordered region spans residues 13-90; sequence CLSPGKDKKN…PPSPPPPPPA (78 aa). The span at 17-26 shows a compositional bias: basic and acidic residues; sequence GKDKKNQKPE. The segment covering 63 to 90 has biased composition (pro residues); sequence PYPPPPPLPDFAPQPLLPPPSPPPPPPA. The 29-residue stretch at 147–175 folds into the IQ domain; sequence EETAAIKIQNAYRCYTARRTLRALRGMAR. Residues 256-273 form a calmodulin-binding region; it reads RSVNRKEASVRRERALAY. A disordered region spans residues 323–527; sequence VSVKSSLKRE…EKKRRNGGSS (205 aa). Residues 335–360 are compositionally biased toward polar residues; it reads IKSSPARSKTQKSASQSSIQWPVNND. A compositionally biased stretch (basic and acidic residues) spans 361 to 370; it reads TKSRKIEVTN. Composition is skewed to polar residues over residues 399–422 and 437–455; these read LDNT…NAQT and NTKT…NLAN. Residues 471–481 show a composition bias toward basic and acidic residues; that stretch reads PKKEVVADKKK. Positions 478-485 match the Nuclear localization signal motif; that stretch reads DKKKPPQM.

Belongs to the IQD family. As to quaternary structure, binds to multiple calmodulin (CaM) in the presence of Ca(2+) and CaM-like proteins.

It localises to the nucleus. Its subcellular location is the nucleolus. May be involved in cooperative interactions with calmodulins or calmodulin-like proteins. Recruits calmodulin proteins to microtubules, thus being a potential scaffold in cellular signaling and trafficking. May associate with nucleic acids and regulate gene expression at the transcriptional or post-transcriptional level. This Arabidopsis thaliana (Mouse-ear cress) protein is Protein IQ-DOMAIN 4.